We begin with the raw amino-acid sequence, 633 residues long: Glutamyl-tRNA(Gln) amidotransferase subunit E (633 aa).

The protein belongs to the GatB/GatE family. GatE subfamily. In terms of assembly, heterodimer of GatD and GatE.

It carries out the reaction L-glutamyl-tRNA(Gln) + L-glutamine + ATP + H2O = L-glutaminyl-tRNA(Gln) + L-glutamate + ADP + phosphate + H(+). Functionally, allows the formation of correctly charged Gln-tRNA(Gln) through the transamidation of misacylated Glu-tRNA(Gln) in organisms which lack glutaminyl-tRNA synthetase. The reaction takes place in the presence of glutamine and ATP through an activated gamma-phospho-Glu-tRNA(Gln). The GatDE system is specific for glutamate and does not act on aspartate. The sequence is that of Glutamyl-tRNA(Gln) amidotransferase subunit E from Methanosarcina barkeri (strain Fusaro / DSM 804).